A 102-amino-acid chain; its full sequence is Co-chaperonin GroES (102 aa).

Belongs to the GroES chaperonin family. In terms of assembly, heptamer of 7 subunits arranged in a ring. Interacts with the chaperonin GroEL.

The protein resides in the cytoplasm. Together with the chaperonin GroEL, plays an essential role in assisting protein folding. The GroEL-GroES system forms a nano-cage that allows encapsulation of the non-native substrate proteins and provides a physical environment optimized to promote and accelerate protein folding. GroES binds to the apical surface of the GroEL ring, thereby capping the opening of the GroEL channel. This is Co-chaperonin GroES from Streptomyces albus G.